Consider the following 309-residue polypeptide: Protease HtpX homolog (309 aa).

2 helical membrane-spanning segments follow: residues 15-35 (NAVLTTYCVIFAFIGLLVDVI) and 54-74 (IFPTITVIMFLVAFVVIVVCI). Zn(2+) is bound at residue histidine 165. Glutamate 166 is a catalytic residue. Histidine 169 contributes to the Zn(2+) binding site. 2 helical membrane passes run 181–201 (VGILSNIMLLVANFSVYFFMG) and 213–233 (MILLVLQIVLPFLTLILQMYL). Glutamate 238 provides a ligand contact to Zn(2+).

It belongs to the peptidase M48B family. Zn(2+) serves as cofactor.

The protein resides in the cell inner membrane. The polypeptide is Protease HtpX homolog (Helicobacter acinonychis (strain Sheeba)).